The chain runs to 118 residues: Evasin P546 (118 aa).

Residues 1 to 21 (MKVLLYIAASCLMLLALNVSA) form the signal peptide. 4 cysteine pairs are disulfide-bonded: cysteine 38–cysteine 59, cysteine 55–cysteine 96, cysteine 72–cysteine 101, and cysteine 91–cysteine 110. The N-linked (GlcNAc...) asparagine glycan is linked to asparagine 45.

Its subcellular location is the secreted. Functionally, salivary chemokine-binding protein which binds to host chemokines CCL1, CCL3, CCL5 and CCL22. This chain is Evasin P546, found in Amblyomma cajennense (Cayenne tick).